The following is a 189-amino-acid chain: Insecticyanin-A (189 aa).

2 disulfide bridges follow: Cys9/Cys119 and Cys43/Cys175.

This sequence belongs to the calycin superfamily. Lipocalin family. Homotetramer. As to expression, synthesized only in the caterpillars, apparently by the epidermis and secreted into the hemolymph. The protein is passed over from the larval hemolymph to that of pupae and adults and is sequestered in the eggs.

The protein resides in the secreted. This protein binds a chromophore: biliverdin IX, isomer gamma. Mixed with lipoprotein-bound carotenes, this blue protein provides hornworms with their green cryptic coloration which serves a camouflage. This is Insecticyanin-A (INSA) from Manduca sexta (Tobacco hawkmoth).